A 979-amino-acid polypeptide reads, in one-letter code: MNNEKVRIYELSKELDLENKDILEFCGQLSIDVKSHSSTITTEEADKIRAIATQKRPQAPKAQRPQRKKKQEILSVQHQPQGAKPQASKSESADANHPTSTAKKLERPKLQSPPSRGKETPAQPEESPANNGAKAEPVAKTTSPKAEPAAPAAPKPKLMGPPPRPTPKSSAPKTPDASPATAETSSGATQADVRAKSLSKNTAEAPAKAPKLRPKPQIVGTVSKKPTPVQAIEPELDEEPDTNNVEGDDDATPEVLLAPPKRPAAKPKKAIGPKPSKRKVWEDEEEDESESKKTKTSKLKRRPVVIDDDDDDFGTTTNNNAEVPSVSLSIARPPKPKSASSSPSPSKPSPSKPKKPAAKRSGSGGSGQSQKEQRRDRPDVKTPPAEITLTETMTLREMADILCIAETDIIRRLFSKGIAINITQTLDYDTAQMVAEEFDVKVIAPEVKSAAEKSTEMLDVADLEHLQHRPPVVTIMGHVDHGKTTLLDSIRETKVAQGEAGGITQHIGAYHVDIEHNGKPGQIVFLDTPGHEAFTAMRARGAKVTDIAILVVAADDGVRPQTLEAIRHAQAAKVPIVVAINKMDKLGAEPDRVKQELSEQGLVPEEWGGETIMVPVSALKGENLDTLLEMILLVSEIEELSANPDRLARGTIIEAHLDRARGPVATLLVQNGTLRVGDIIVAGSVMGKIRAMISDRGEKVTDATPSFAVEILGLSEVPAAGDEFEVYSSEKEARAIADERAEGKRQSRLQQAMSSRRVSLSSLSAQAQEGELKELNLVLKADVQGSVEAILGSLQQLPQDEVQIRVLLSAPGEISETDVDLAAASGAIIIGFNTTLAPGARQAAEQEGVDIREYNVIYRFLEEIQGAMEGLLDPEEVEEPLGRAEVRAVFPVGRGSVAGCYVQSGKVVRNRMIRVRRGDVVVYDGSLDSLKRVREDVREVNSGYECGIGVDKFSTWKEGDIIEAYEMVFKRRTLAGRTS.

Residues 33-391 form a disordered region; that stretch reads VKSHSSTITT…TPPAEITLTE (359 aa). 2 stretches are compositionally biased toward low complexity: residues 54–63 and 139–150; these read QKRPQAPKAQ and AKTTSPKAEPAA. Residues 151–166 show a composition bias toward pro residues; the sequence is PAAPKPKLMGPPPRPT. Residues 234–252 are compositionally biased toward acidic residues; that stretch reads PELDEEPDTNNVEGDDDAT. Composition is skewed to basic residues over residues 263–278 and 294–303; these read PAAKPKKAIGPKPSKR and TKTSKLKRRP. The segment covering 314–328 has biased composition (polar residues); sequence GTTTNNNAEVPSVSL. Residues 371 to 380 show a composition bias toward basic and acidic residues; it reads KEQRRDRPDV. A tr-type G domain is found at 468–641; sequence HRPPVVTIMG…LLVSEIEELS (174 aa). Residues 477 to 484 are G1; the sequence is GHVDHGKT. 477–484 is a binding site for GTP; the sequence is GHVDHGKT. The tract at residues 502–506 is G2; it reads GITQH. The tract at residues 527-530 is G3; that stretch reads DTPG. Residues 527–531 and 581–584 each bind GTP; these read DTPGH and NKMD. The tract at residues 581-584 is G4; it reads NKMD. Positions 617–619 are G5; it reads SAL.

It belongs to the TRAFAC class translation factor GTPase superfamily. Classic translation factor GTPase family. IF-2 subfamily.

It is found in the cytoplasm. Its function is as follows. One of the essential components for the initiation of protein synthesis. Protects formylmethionyl-tRNA from spontaneous hydrolysis and promotes its binding to the 30S ribosomal subunits. Also involved in the hydrolysis of GTP during the formation of the 70S ribosomal complex. The chain is Translation initiation factor IF-2 from Picosynechococcus sp. (strain ATCC 27264 / PCC 7002 / PR-6) (Agmenellum quadruplicatum).